The chain runs to 479 residues: Cardiolipin synthase A (479 aa).

2 helical membrane-spanning segments follow: residues 8-28 and 38-58; these read FFGYLLGMIHLLGIVAALHAL and IAWAMPLLFIPYLTLIPYLIF. 2 consecutive PLD phosphodiesterase domains span residues 218–245 and 392–419; these read VNFRNHRKIVVVDGLLGFIGGHNVGDEY and QPGFLHQKVVLVDDDVSAIGSANLDNRS. Residues histidine 223, lysine 225, aspartate 230, histidine 397, lysine 399, and aspartate 404 contribute to the active site.

This sequence belongs to the phospholipase D family. Cardiolipin synthase subfamily. ClsA sub-subfamily.

It is found in the cell inner membrane. The enzyme catalyses 2 a 1,2-diacyl-sn-glycero-3-phospho-(1'-sn-glycerol) = a cardiolipin + glycerol. Catalyzes the reversible phosphatidyl group transfer from one phosphatidylglycerol molecule to another to form cardiolipin (CL) (diphosphatidylglycerol) and glycerol. The chain is Cardiolipin synthase A from Pseudomonas putida (strain ATCC 700007 / DSM 6899 / JCM 31910 / BCRC 17059 / LMG 24140 / F1).